The chain runs to 775 residues: Serine/threonine-protein kinase-like protein CCR1 (775 aa).

An N-terminal signal peptide occupies residues 1 to 23 (METRCSLLFLSLILLYLPKPGSG). Over 24 to 439 (FGSSGPIAAS…DKHWHQLQRL (416 aa)) the chain is Extracellular. N-linked (GlcNAc...) asparagine glycans are attached at residues Asn-57, Asn-102, Asn-167, Asn-213, Asn-220, Asn-241, Asn-261, Asn-292, Asn-328, and Asn-360. One copy of the TNFR-Cys repeat lies at 351-406 (PCNEKEFAFNASILNEPDLTSLCVRKELMVCSPCGSDCSHGFFLSSSCTANSDRIC). Cystine bridges form between Cys-352–Cys-381, Cys-384–Cys-398, and Cys-388–Cys-406. Asn-414 carries N-linked (GlcNAc...) asparagine glycosylation. A helical membrane pass occupies residues 440 to 460 (VLIIGSCASALLIIIIGCCVV). Residues 461–775 (PRIVTSPNKE…EHVARDALIF (315 aa)) lie on the Cytoplasmic side of the membrane. The 251-residue stretch at 520-770 (FKEFNELGRG…LANWLEHVAR (251 aa)) folds into the Protein kinase domain. ATP is bound by residues 526 to 534 (LGRGSYGFV) and Lys-548. The active-site Proton acceptor is the Asp-645.

It belongs to the protein kinase superfamily. Ser/Thr protein kinase family. In terms of assembly, homodimer. Expressed in roots, leaves, shoot apical meristems (SAM), and floral buds.

The protein localises to the membrane. The catalysed reaction is L-seryl-[protein] + ATP = O-phospho-L-seryl-[protein] + ADP + H(+). It carries out the reaction L-threonyl-[protein] + ATP = O-phospho-L-threonyl-[protein] + ADP + H(+). Serine/threonine-protein kinase with low activity. The polypeptide is Serine/threonine-protein kinase-like protein CCR1 (CCR1) (Arabidopsis thaliana (Mouse-ear cress)).